Reading from the N-terminus, the 376-residue chain is Pyrimidine monooxygenase RutA (376 aa).

FMN is bound by residues 61–62 (IK), N127, E136, 152–153 (RY), and S202.

This sequence belongs to the NtaA/SnaA/DszA monooxygenase family. RutA subfamily.

It catalyses the reaction uracil + FMNH2 + NADH + O2 = (Z)-3-ureidoacrylate + FMN + NAD(+) + H2O + H(+). It carries out the reaction thymine + FMNH2 + NADH + O2 = (Z)-2-methylureidoacrylate + FMN + NAD(+) + H2O + H(+). In terms of biological role, catalyzes the pyrimidine ring opening between N-3 and C-4 by an unusual flavin hydroperoxide-catalyzed mechanism, adding oxygen atoms in the process to yield ureidoacrylate peracid, that immediately reacts with FMN forming ureidoacrylate and FMN-N(5)-oxide. The FMN-N(5)-oxide reacts spontaneously with NADH to produce FMN. Requires the flavin reductase RutF to regenerate FMN in vivo. The chain is Pyrimidine monooxygenase RutA from Methylorubrum populi (strain ATCC BAA-705 / NCIMB 13946 / BJ001) (Methylobacterium populi).